The primary structure comprises 224 residues: Cytidylate kinase (224 aa).

13–21 (GPSASGKGT) serves as a coordination point for ATP.

The protein belongs to the cytidylate kinase family. Type 1 subfamily.

It localises to the cytoplasm. The enzyme catalyses CMP + ATP = CDP + ADP. It catalyses the reaction dCMP + ATP = dCDP + ADP. In Nitrosomonas eutropha (strain DSM 101675 / C91 / Nm57), this protein is Cytidylate kinase.